A 148-amino-acid chain; its full sequence is Coactosin (148 aa).

Residues 1-134 enclose the ADF-H domain; it reads MSGFDLSEVA…VEDEIAAKIK (134 aa). Residues 71–76 carry the F-loop; important for stable binding to G-actin and F-actin motif; sequence DEESKR. Residue S147 is modified to Phosphoserine.

Belongs to the actin-binding proteins ADF family. Coactosin subfamily. As to quaternary structure, interacts with 14-3-3 protein 3. In terms of processing, phosphorylation at Ser-147 appears not to affect its binding to actin; however, it may regulate phagocytosis and motility.

It localises to the cytoplasm. Its subcellular location is the cell projection. It is found in the phagocytic cup. The protein localises to the pseudopodium. The protein resides in the cell membrane. It localises to the cytoskeleton. Functionally, actin-binding protein which is involved in F-actin stabilization. May play a role during phagocytosis and pseudopod formation by contributing to the maintenance of F-actin. The polypeptide is Coactosin (Entamoeba histolytica (strain ATCC 30459 / HM-1:IMSS / ABRM)).